The chain runs to 372 residues: CXADR-like membrane protein (372 aa).

An N-terminal signal peptide occupies residues 1 to 17; the sequence is MSLFFLWLVTYYVGTLG. Ig-like C2-type domains follow at residues 18-126 and 134-223; these read THTE…VILK and PKCE…VRVT. The Extracellular segment spans residues 18 to 234; sequence THTEIKRVAE…QYVQSIGMVA (217 aa). Intrachain disulfides connect Cys-34-Cys-110 and Cys-152-Cys-207. 2 N-linked (GlcNAc...) asparagine glycosylation sites follow: Asn-73 and Asn-196. The chain crosses the membrane as a helical span at residues 235–255; the sequence is GAVTGIVAGALLIFLLIWLLI. The Cytoplasmic segment spans residues 256-372; it reads RRKSKERYEE…PSQSRAFQTV (117 aa). The span at 263-280 shows a compositional bias: basic and acidic residues; sequence YEEEDRPNEIREDAEAPR. The disordered stretch occupies residues 263 to 372; the sequence is YEEEDRPNEI…PSQSRAFQTV (110 aa). 2 stretches are compositionally biased toward low complexity: residues 287–313 and 352–361; these read SSSS…ASRS and LTKAETTLST. Residues 362–372 show a composition bias toward polar residues; it reads MPSQSRAFQTV.

As to expression, predominantly expressed in the white adipose tissue.

It is found in the cell junction. It localises to the tight junction. The protein localises to the cell membrane. Its function is as follows. May be involved in the cell-cell adhesion. May play a role in adipocyte differentiation and development of obesity. Is required for normal small intestine development. The sequence is that of CXADR-like membrane protein (Clmp) from Rattus norvegicus (Rat).